Reading from the N-terminus, the 629-residue chain is MFYPDPFDVIIIGGGHAGTEAAMAAARMGQQTLLLTHNIDTLGQMSCNPAIGGIGKGHLVKEVDALGGLMAKAIDQAGIQFRILNASKGPAVRATRAQADRVLYRQAVRTALENQPNLMIFQQAVEDLIVENDRVVGAVTQMGLKFRAKAVVLTVGTFLDGKIHIGLDNYSGGRAGDPPSIPLSRRLRELPLRVGRLKTGTPPRIDARTIDFSVLAQQHGDNPMPVFSFMGNASQHPQQVPCYITHTNEKTHDVIRSNLDRSPMYAGVIEGVGPRYCPSIEDKVMRFADRNQHQIFLEPEGLTSNEIYPNGISTSLPFDVQMQIVRSMQGMENAKIVRPGYAIEYDFFDPRDLKPTLESKFIQGLFFAGQINGTTGYEEAAAQGLLAGLNAARLSADKEGWAPARSQAYLGVLVDDLCTLGTKEPYRMFTSRAEYRLMLREDNADLRLTEIGRELGLVDDERWARFNEKLENIERERQRLKSTWVTPSAEAAAEVNAHLTAPLSREASGEDLLRRPEMTYEKLTTLTPFAPALTDEQAAEQVEIQVKYEGYIARQQDEIEKQLRNENTLLPATLDYRQVSGLSNEVIAKLNDHKPASIGQASRISGVTPAAISILLVWLKKQGMLRRSA.

FAD is bound by residues 13-18 (GGGHAG), Val-125, and Ser-180. 273-287 (GPRYCPSIEDKVMRF) lines the NAD(+) pocket. Gln-370 lines the FAD pocket.

This sequence belongs to the MnmG family. In terms of assembly, homodimer. Heterotetramer of two MnmE and two MnmG subunits. It depends on FAD as a cofactor.

Its subcellular location is the cytoplasm. NAD-binding protein involved in the addition of a carboxymethylaminomethyl (cmnm) group at the wobble position (U34) of certain tRNAs, forming tRNA-cmnm(5)s(2)U34. The protein is tRNA uridine 5-carboxymethylaminomethyl modification enzyme MnmG of Escherichia coli O139:H28 (strain E24377A / ETEC).